The sequence spans 396 residues: Phosphoglycerate kinase (396 aa).

Substrate is bound by residues 21–23, R36, 59–62, R113, and R146; these read DLN and HLGR. Residues K197, E319, and 345–348 contribute to the ATP site; that span reads GGDT.

This sequence belongs to the phosphoglycerate kinase family. As to quaternary structure, monomer.

Its subcellular location is the cytoplasm. It carries out the reaction (2R)-3-phosphoglycerate + ATP = (2R)-3-phospho-glyceroyl phosphate + ADP. It functions in the pathway carbohydrate degradation; glycolysis; pyruvate from D-glyceraldehyde 3-phosphate: step 2/5. The protein is Phosphoglycerate kinase of Legionella pneumophila (strain Corby).